A 338-amino-acid chain; its full sequence is MKVYYDKDADLSLIKGKQITIVGYGSQGHAHAQNLKDSGCKVTVGLRKSGASWKKAEAAGLDVREVAEAVSNADIVMILLPDENIPGVYYNDVEPNIKQGATLAFAHGFNVHYNQVVPRDDLDVIMVAPKGPGHTVRSEYLKGGGVPSLIAVHQDRSGKAKDIALSYAAANGGTKGGVIETNFREETETDLFGEQAVLCGGAVELVKMGFETLTEAGYAPEMAYFECLHELKLIVDLMYEGGIANMNYSISNNAEYGEYVTGPEVINEQSREAMRAALKRIQTGEYAKMFIQEGRTNYPSMTARRRLNAAHPIEQVGGQLRDMMPWIKKNKLVDQSKN.

Positions 1–181 (MKVYYDKDAD…GGTKGGVIET (181 aa)) constitute a KARI N-terminal Rossmann domain. NADP(+)-binding positions include 24–27 (YGSQ), arginine 47, and serine 52. Histidine 107 is an active-site residue. Residue glycine 133 coordinates NADP(+). Positions 182-327 (NFREETETDL…GQLRDMMPWI (146 aa)) constitute a KARI C-terminal knotted domain. Mg(2+) is bound by residues aspartate 190, glutamate 194, glutamate 226, and glutamate 230. Serine 251 lines the substrate pocket.

This sequence belongs to the ketol-acid reductoisomerase family. It depends on Mg(2+) as a cofactor.

It carries out the reaction (2R)-2,3-dihydroxy-3-methylbutanoate + NADP(+) = (2S)-2-acetolactate + NADPH + H(+). It catalyses the reaction (2R,3R)-2,3-dihydroxy-3-methylpentanoate + NADP(+) = (S)-2-ethyl-2-hydroxy-3-oxobutanoate + NADPH + H(+). The protein operates within amino-acid biosynthesis; L-isoleucine biosynthesis; L-isoleucine from 2-oxobutanoate: step 2/4. Its pathway is amino-acid biosynthesis; L-valine biosynthesis; L-valine from pyruvate: step 2/4. Its function is as follows. Involved in the biosynthesis of branched-chain amino acids (BCAA). Catalyzes an alkyl-migration followed by a ketol-acid reduction of (S)-2-acetolactate (S2AL) to yield (R)-2,3-dihydroxy-isovalerate. In the isomerase reaction, S2AL is rearranged via a Mg-dependent methyl migration to produce 3-hydroxy-3-methyl-2-ketobutyrate (HMKB). In the reductase reaction, this 2-ketoacid undergoes a metal-dependent reduction by NADPH to yield (R)-2,3-dihydroxy-isovalerate. The protein is Ketol-acid reductoisomerase (NADP(+)) of Aromatoleum aromaticum (strain DSM 19018 / LMG 30748 / EbN1) (Azoarcus sp. (strain EbN1)).